A 117-amino-acid polypeptide reads, in one-letter code: uncharacterized protein (117 aa).

The next 2 membrane-spanning stretches (helical) occupy residues 9-29 (ITSH…FIPF) and 56-76 (VIIV…FFIP).

It is found in the membrane. This is an uncharacterized protein from Saccharomyces cerevisiae (strain ATCC 204508 / S288c) (Baker's yeast).